We begin with the raw amino-acid sequence, 188 residues long: MAASAFAGAVRAASGILRPLNILASSTYRNCVKNASLISALSTGRFSHIQTPVVSSTPRLPTSERNLTCGHTSVILNRVAPVLPSVLKLPVRSLTYFSARKGKRKTVKAVIYRFLRLHCGLWVRRKAGYKKKLWKKTPARKKRLREFVFCNKTQSKLLDKMTTSFWKRRNWYVDDPYQKYHDRTNLKV.

This sequence belongs to the bacterial ribosomal protein bL35 family.

Its subcellular location is the mitochondrion. This chain is Large ribosomal subunit protein bL35m (MRPL35), found in Pongo abelii (Sumatran orangutan).